Consider the following 301-residue polypeptide: Phosphonates import ATP-binding protein PhnC (301 aa).

One can recognise an ABC transporter domain in the interval I8–A256. Residue G41–S48 participates in ATP binding. The segment at A264–A287 is disordered.

It belongs to the ABC transporter superfamily. Phosphonates importer (TC 3.A.1.9.1) family. As to quaternary structure, the complex is composed of two ATP-binding proteins (PhnC), two transmembrane proteins (PhnE) and a solute-binding protein (PhnD).

It is found in the cell inner membrane. The enzyme catalyses phosphonate(out) + ATP + H2O = phosphonate(in) + ADP + phosphate + H(+). In terms of biological role, part of the ABC transporter complex PhnCDE involved in phosphonates import. Responsible for energy coupling to the transport system. The polypeptide is Phosphonates import ATP-binding protein PhnC (Paraburkholderia xenovorans (strain LB400)).